The chain runs to 432 residues: Trigger factor (432 aa).

The PPIase FKBP-type domain maps to E161–P246.

Belongs to the FKBP-type PPIase family. Tig subfamily.

It is found in the cytoplasm. It catalyses the reaction [protein]-peptidylproline (omega=180) = [protein]-peptidylproline (omega=0). Involved in protein export. Acts as a chaperone by maintaining the newly synthesized protein in an open conformation. Functions as a peptidyl-prolyl cis-trans isomerase. The sequence is that of Trigger factor from Enterobacter sp. (strain 638).